The following is a 407-amino-acid chain: MAVGNVAVPETIYPIEGIKLSATAAGVRYKDRDDLVVIEIATDAATAVVTTKNAFCAAPVRVLREHFAKASPRYLVTNTGNANAGTGADGKRRAIDICAALAAKAGVNNNTVLPFSTGVIGEPLNSEAIIAGLDNALANLAPDNWLAAANGIRTTDTIPKLTSKKVNVAGSHYHITGMSKGSGMIRPNMATMLGYVATDANIAADLLQEMLSAINEQSFNRITVDGDTSTNDCCVLIATGAASSDIIDSPEHPHYQPLFDALAEVFIRLAQLIVRDGEGATKFMTVKVTGGKTTQECCDVAYAVAHSPLVKTAFFASDANWGRILAAVGYAGVEDLDTEQVDVYLDEVMICQNGGVAPTYTEEAGKTVMSRPEITIHIDLARGEAIDTVYTCDLSYDYVKINADYRS.

The substrate site is built by threonine 154, lysine 180, threonine 191, glutamate 278, asparagine 402, and serine 407. Residue threonine 191 is the Nucleophile of the active site.

It belongs to the ArgJ family. In terms of assembly, heterotetramer of two alpha and two beta chains.

Its subcellular location is the cytoplasm. The catalysed reaction is N(2)-acetyl-L-ornithine + L-glutamate = N-acetyl-L-glutamate + L-ornithine. It catalyses the reaction L-glutamate + acetyl-CoA = N-acetyl-L-glutamate + CoA + H(+). Its pathway is amino-acid biosynthesis; L-arginine biosynthesis; L-ornithine and N-acetyl-L-glutamate from L-glutamate and N(2)-acetyl-L-ornithine (cyclic): step 1/1. It participates in amino-acid biosynthesis; L-arginine biosynthesis; N(2)-acetyl-L-ornithine from L-glutamate: step 1/4. In terms of biological role, catalyzes two activities which are involved in the cyclic version of arginine biosynthesis: the synthesis of N-acetylglutamate from glutamate and acetyl-CoA as the acetyl donor, and of ornithine by transacetylation between N(2)-acetylornithine and glutamate. The protein is Arginine biosynthesis bifunctional protein ArgJ of Psychrobacter arcticus (strain DSM 17307 / VKM B-2377 / 273-4).